The chain runs to 635 residues: Arabinoxylan arabinofuranohydrolase (635 aa).

A signal peptide spans 1–26 (MIRKCLVLFLSFALLLSVFPMLNVDA). The active-site Proton acceptor is the Asp-49. Residue Glu-248 is the Proton donor of the active site. Asn-311 serves as a coordination point for substrate. CBM6 domains follow at residues 379–508 (TRVE…WQFT) and 517–634 (TKVE…IEFS). Ca(2+) contacts are provided by Glu-382, Glu-384, Asn-406, Leu-407, Asp-503, Glu-520, Glu-522, Asp-539, Tyr-544, Asp-620, Trp-624, Asp-625, and Asp-629.

Belongs to the glycosyl hydrolase 43 family.

It is found in the secreted. The enzyme catalyses Hydrolysis of terminal non-reducing alpha-L-arabinofuranoside residues in alpha-L-arabinosides.. The protein operates within glycan degradation; xylan degradation. Its activity is regulated as follows. Activated by calcium and magnesium. Inhibited by copper. Functionally, cleaves arabinose units from O-2- or O-3-monosubstituted xylose residues, thereby assisting in arabinoxylan (AX) and short-chain arabinoxylo-oligosaccharide (AXOS) degradation. Preferres wheat flour xylan over oat spelt xylan as substrate. Does not display endoxylanase activity. The protein is Arabinoxylan arabinofuranohydrolase (xynD) of Paenibacillus polymyxa (Bacillus polymyxa).